Reading from the N-terminus, the 354-residue chain is Vascular endothelial growth factor D (354 aa).

An N-terminal signal peptide occupies residues 1–21; it reads MYREWVVVNVFMMLYVQLVQG. A propeptide spans 22-88 (or 99 (in a minor form)); sequence SSNEHGPVKR…SRSASHRSTR (67 aa). Intrachain disulfides connect C111-C153, C142-C189, and C146-C191. Residues N155 and N185 are each glycosylated (N-linked (GlcNAc...) asparagine). Positions 206–354 are excised as a propeptide; it reads SIQIPEEDRC…AQGPHSRKNP (149 aa). A 1; approximate repeat occupies 222–237; it reads CPIDMLWDSNKCKCVL. The segment at 222–318 is 4 X 16 AA repeats of C-X(10)-C-X-C-X(1,3)-C; it reads CPIDMLWDSN…PDTCSCEDRC (97 aa). Repeat copies occupy residues 258 to 273, 277 to 293, and 301 to 318. The N-linked (GlcNAc...) asparagine glycan is linked to N287.

The protein belongs to the PDGF/VEGF growth factor family. As to quaternary structure, homodimer; non-covalent and antiparallel. Undergoes a complex proteolytic maturation which generates a variety of processed secreted forms with increased activity toward VEGFR-3 and VEGFR-2. VEGF-D first form an antiparallel homodimer linked by disulfide bonds before secretion. The fully processed VEGF-D is composed mostly of two VEGF homology domains (VHDs) bound by non-covalent interactions. In terms of tissue distribution, highly expressed in lung, heart, small intestine and fetal lung, and at lower levels in skeletal muscle, colon, and pancreas.

The protein localises to the secreted. Its function is as follows. Growth factor active in angiogenesis, lymphangiogenesis and endothelial cell growth, stimulating their proliferation and migration and also has effects on the permeability of blood vessels. May function in the formation of the venous and lymphatic vascular systems during embryogenesis, and also in the maintenance of differentiated lymphatic endothelium in adults. Binds and activates VEGFR-2 (KDR/FLK1) and VEGFR-3 (FLT4) receptors. The sequence is that of Vascular endothelial growth factor D from Homo sapiens (Human).